Consider the following 58-residue polypeptide: Ribosome biogenesis protein Nop10 (58 aa).

Belongs to the NOP10 family.

Functionally, involved in ribosome biogenesis; more specifically in 18S rRNA pseudouridylation and in cleavage of pre-rRNA. The polypeptide is Ribosome biogenesis protein Nop10 (Thermococcus onnurineus (strain NA1)).